The chain runs to 169 residues: Cell division inhibitor SulA (169 aa).

A ftsZ binding region spans residues 106 to 112; sequence ALRTGNY. Positions 162 to 169 are lon protease binding; that stretch reads KIHSNLYH.

It belongs to the SulA family. Interacts with FtsZ. Post-translationally, is rapidly cleaved and degraded by the Lon protease once DNA damage is repaired.

In terms of biological role, component of the SOS system and an inhibitor of cell division. Accumulation of SulA causes rapid cessation of cell division and the appearance of long, non-septate filaments. In the presence of GTP, binds a polymerization-competent form of FtsZ in a 1:1 ratio, thus inhibiting FtsZ polymerization and therefore preventing it from participating in the assembly of the Z ring. This mechanism prevents the premature segregation of damaged DNA to daughter cells during cell division. The chain is Cell division inhibitor SulA from Citrobacter koseri (strain ATCC BAA-895 / CDC 4225-83 / SGSC4696).